A 1492-amino-acid polypeptide reads, in one-letter code: Cystic fibrosis transmembrane conductance regulator (1492 aa).

The Cytoplasmic segment spans residues methionine 1–phenylalanine 78. A helical transmembrane segment spans residues phenylalanine 79–glutamine 99. The ABC transmembrane type-1 1 domain occupies phenylalanine 82–leucine 366. Over proline 100–tyrosine 123 the chain is Extracellular. The helical transmembrane segment at leucine 124–glutamine 147 threads the bilayer. The Cytoplasmic segment spans residues histidine 148–valine 196. Residues alanine 197–tryptophan 217 form a helical membrane-spanning segment. Over asparagine 218–phenylalanine 223 the chain is Extracellular. A helical membrane pass occupies residues valine 224–lysine 244. At methionine 245 to lysine 299 the chain is on the cytoplasmic side. A helical transmembrane segment spans residues valine 300–phenylalanine 320. Residues leucine 321–threonine 340 lie on the Extracellular side of the membrane. A helical membrane pass occupies residues isoleucine 341 to isoleucine 359. The Cytoplasmic segment spans residues glutamine 360–asparagine 867. ATP-binding positions include tryptophan 402, serine 435, glycine 459–serine 466, and glutamine 494. In terms of domain architecture, ABC transporter 1 spans asparagine 424–glycine 647. The disordered R region stretch occupies residues serine 655–glutamate 840. The chain crosses the membrane as a helical span at residues leucine 868–alanine 888. In terms of domain architecture, ABC transmembrane type-1 2 spans leucine 868–glycine 1169. The Extracellular segment spans residues glycine 889–isoleucine 932. N-linked (GlcNAc...) asparagine glycans are attached at residues asparagine 905 and asparagine 923. Residues tyrosine 933–histidine 953 traverse the membrane as a discontinuously helical segment. Residues threonine 954–threonine 1004 lie on the Cytoplasmic side of the membrane. Residues valine 1005–leucine 1025 traverse the membrane as a helical segment. Residues glutamine 1026–proline 1027 lie on the Extracellular side of the membrane. Residues tyrosine 1028–leucine 1048 traverse the membrane as a helical segment. At arginine 1049 to threonine 1109 the chain is on the cytoplasmic side. A helical transmembrane segment spans residues leucine 1110–phenylalanine 1130. At isoleucine 1131 to glycine 1144 the chain is on the extracellular side. The helical transmembrane segment at isoleucine 1145 to isoleucine 1165 threads the bilayer. At aspartate 1166–leucine 1492 the chain is on the cytoplasmic side. The ABC transporter 2 domain maps to methionine 1220–histidine 1453. ATP contacts are provided by residues tyrosine 1229 and glycine 1254–serine 1261. Over residues arginine 1465–proline 1474 the composition is skewed to basic residues. Residues arginine 1465 to leucine 1492 are disordered. Residues glutamate 1481–leucine 1492 show a composition bias toward acidic residues. The PDZ-binding motif lies at alanine 1483–glutamate 1485.

The protein belongs to the ABC transporter superfamily. ABCC family. CFTR transporter (TC 3.A.1.202) subfamily. In terms of assembly, monomer; does not require oligomerization for channel activity. May form oligomers in the membrane. Phosphorylated; cAMP treatment promotes phosphorylation and activates the channel. Dephosphorylation decreases the ATPase activity (in vitro). Phosphorylation at PKA sites activates the channel. Phosphorylation at PKC sites enhances the response to phosphorylation by PKA. Expressed in the rectal gland (at protein level).

It is found in the apical cell membrane. The protein resides in the early endosome membrane. It localises to the cell membrane. The protein localises to the recycling endosome membrane. Its subcellular location is the endoplasmic reticulum membrane. The enzyme catalyses ATP + H2O + closed Cl(-) channel = ADP + phosphate + open Cl(-) channel.. The catalysed reaction is chloride(in) = chloride(out). It carries out the reaction hydrogencarbonate(in) = hydrogencarbonate(out). It catalyses the reaction ATP + H2O = ADP + phosphate + H(+). Its function is as follows. Epithelial ion channel that plays an important role in the regulation of epithelial ion and water transport and fluid homeostasis. Mediates the transport of chloride ions across the cell membrane. Possesses an intrinsic ATPase activity and utilizes ATP to gate its channel; the passive flow of anions through the channel is gated by cycles of ATP binding and hydrolysis by the ATP-binding domains. The ion channel is also permeable to HCO(3)(-); selectivity depends on the extracellular chloride concentration. Exerts its function also by modulating the activity of other ion channels and transporters. Contributes to the regulation of the pH and the ion content of the epithelial fluid layer. The polypeptide is Cystic fibrosis transmembrane conductance regulator (Squalus acanthias (Spiny dogfish)).